The primary structure comprises 360 residues: G-protein coupled receptor 15 (360 aa).

Topologically, residues 1 to 33 (MDPEETSVYLDYYYATSPNSDIRETHSHVPYTS) are extracellular. The chain crosses the membrane as a helical span at residues 34-54 (VFLPVFYTAVFLTGVLGNLVL). Topologically, residues 55–69 (MGALHFKPGSRRLID) are cytoplasmic. Residues 70 to 90 (IFIINLAASDFIFLVTLPLWV) form a helical membrane-spanning segment. Residues 91-120 (DKEASLGLWRTGSFLCKGSSYMISVNMHCS) are Extracellular-facing. A helical membrane pass occupies residues 121–141 (VLLLTCMSVDRYLAIVWPVVS). The Cytoplasmic segment spans residues 142 to 149 (RKFRRTDC). The chain crosses the membrane as a helical span at residues 150 to 170 (AYVVCASIWFISCLLGLPTLL). The Extracellular portion of the chain corresponds to 171-192 (SRELTLIDDKPYCAEKKATPIK). The helical transmembrane segment at 193 to 213 (LIWSLVALIFTFFVPLLSIVT) threads the bilayer. The Cytoplasmic portion of the chain corresponds to 214-239 (CYCCIARKLCAHYQQSGKHNKKLKKS). A helical transmembrane segment spans residues 240 to 260 (IKIIFIVVAAFLVSWLPFNTF). The Extracellular portion of the chain corresponds to 261–284 (KFLAIVSGLRQEHYLPSAILQLGM). A helical membrane pass occupies residues 285–305 (EVSGPLAFANSCVNPFIYYIF). The Cytoplasmic portion of the chain corresponds to 306–360 (DSYIRRAIVHCLCPCLKNYDFGSSTETSDSHLTKALSTFIHAEDFARRRKRSVSL). Phosphoserine is present on Ser359.

It belongs to the G-protein coupled receptor 1 family. Interacts with adapter YWHAE; this interaction promotes ER-to-Golgi transport of GPR15. Interacts with GNAI1; this interaction initiates the signaling pathway. Post-translationally, phosphorylation is necessary for YWHAE binding and efficient surface expression. In terms of processing, O-glycosylated. Sialylated O-glycans in the N-terminal tail inhibits binding of GPR15LG. Sulfation is required for efficient binding of GPR15LG. Highly expressed in lymphoid tissues, including macrophages and peripheral blood mononuclear cells.

Its subcellular location is the cell membrane. In terms of biological role, g protein-coupled receptor that plays an important role in immune homeostasis. Acts via its natural ligand GPR15LG, a chemokine-like polypeptide strongly expressed in gastrointestinal tissues. GPR15-GPR15LG signaling axis regulates intestinal homeostasis and inflammation through the migration of immune cells. Controls thereby the specific homing of T-cells, particularly FOXP3+ regulatory T-cells (Tregs), to the large intestine lamina propria. Also required for skin localization of thymus-derived dendritic epidermal T-cells. Plays an important role in mediating cytoprotective function as well as angiogenesis of thrombomodulin. Mechanistically, preferentially signals through the Gi/o pathway to inhibit adenylate cyclase activity and activate a phosphatidylinositol-calcium second messenger system that regulates the release of Ca(2+) ions from intracellular stores. (Microbial infection) Acts as an alternative coreceptor with CD4 for HIV-1 infection. This Homo sapiens (Human) protein is G-protein coupled receptor 15 (GPR15).